Reading from the N-terminus, the 266-residue chain is Undecaprenyl-diphosphatase (266 aa).

The next 8 helical transmembrane spans lie at 4 to 24, 46 to 66, 82 to 102, 105 to 125, 142 to 162, 182 to 202, 216 to 236, and 244 to 264; these read WLIA…PVSS, VLIQ…RLWG, IGIL…HDFI, VLYE…FILL, YPLK…VPGV, AAEF…AYDL, LIGI…KTVL, and FAPF…LLYI.

This sequence belongs to the UppP family.

The protein resides in the cell inner membrane. The enzyme catalyses di-trans,octa-cis-undecaprenyl diphosphate + H2O = di-trans,octa-cis-undecaprenyl phosphate + phosphate + H(+). Functionally, catalyzes the dephosphorylation of undecaprenyl diphosphate (UPP). Confers resistance to bacitracin. The polypeptide is Undecaprenyl-diphosphatase (Caulobacter vibrioides (strain ATCC 19089 / CIP 103742 / CB 15) (Caulobacter crescentus)).